A 165-amino-acid chain; its full sequence is Protein NKG7 (165 aa).

4 helical membrane passes run 9-29, 61-81, 92-112, and 133-153; these read LLTS…NFWF, FCIL…MSCI, IVST…MTVY, and FYLG…SLGA.

This sequence belongs to the PMP-22/EMP/MP20 family.

It is found in the cell membrane. The protein localises to the cytolytic granule membrane. Functionally, regulates cytotoxic granule exocytosis in effector lymphocytes, thus acting as a critical mediator of inflammation in a broad range of infectious and non-infectious diseases. Essential for cytotoxic degranulation of natural killer (NK) cells and CD8(+) T-cells and for the activation of CD4(+) T-cells following infection. Plays a critical role in CD8(+) T-cell and NK cell-mediated cytolysis of target cells and contributes to the cytolytic activity via the perforin/granzyme pathway by enhancing exocytosis of LAMP1-carrying lytic granules. Contributes to NK cell-mediated control of cancer metastasis. The protein is Protein NKG7 (NKG7) of Bos taurus (Bovine).